The following is a 637-amino-acid chain: Penicillin-binding protein 1A (637 aa).

The segment at 62 to 224 (LIADLGSERR…NQYDPYSHPE (163 aa)) is transglycosylase. Glutamate 91 functions as the Proton donor; for transglycosylase activity in the catalytic mechanism. Residues 298–612 (EVYTNVDSKV…RLTPIVGDGF (315 aa)) form a transpeptidase region. Residue serine 371 is the Acyl-ester intermediate; for transpeptidase activity of the active site.

The protein in the N-terminal section; belongs to the glycosyltransferase 51 family. In the C-terminal section; belongs to the transpeptidase family.

It is found in the secreted. It carries out the reaction [GlcNAc-(1-&gt;4)-Mur2Ac(oyl-L-Ala-gamma-D-Glu-L-Lys-D-Ala-D-Ala)](n)-di-trans,octa-cis-undecaprenyl diphosphate + beta-D-GlcNAc-(1-&gt;4)-Mur2Ac(oyl-L-Ala-gamma-D-Glu-L-Lys-D-Ala-D-Ala)-di-trans,octa-cis-undecaprenyl diphosphate = [GlcNAc-(1-&gt;4)-Mur2Ac(oyl-L-Ala-gamma-D-Glu-L-Lys-D-Ala-D-Ala)](n+1)-di-trans,octa-cis-undecaprenyl diphosphate + di-trans,octa-cis-undecaprenyl diphosphate + H(+). The enzyme catalyses Preferential cleavage: (Ac)2-L-Lys-D-Ala-|-D-Ala. Also transpeptidation of peptidyl-alanyl moieties that are N-acyl substituents of D-alanine.. It participates in cell wall biogenesis; peptidoglycan biosynthesis. In terms of biological role, cell wall formation. The chain is Penicillin-binding protein 1A (ponA) from Streptococcus oralis.